We begin with the raw amino-acid sequence, 522 residues long: GMP synthase [glutamine-hydrolyzing] (522 aa).

A Glutamine amidotransferase type-1 domain is found at 8–204 (RLLIIDFGSQ…FVRLAGFKGD (197 aa)). Residue cysteine 86 is the Nucleophile of the active site. Residues histidine 179 and glutamate 181 contribute to the active site. Residues 205–397 (WTMGAYREEA…LGLPASFIGR (193 aa)) enclose the GMPS ATP-PPase domain. 232–238 (SGGVDSS) contributes to the ATP binding site.

In terms of assembly, homodimer.

The catalysed reaction is XMP + L-glutamine + ATP + H2O = GMP + L-glutamate + AMP + diphosphate + 2 H(+). The protein operates within purine metabolism; GMP biosynthesis; GMP from XMP (L-Gln route): step 1/1. Functionally, catalyzes the synthesis of GMP from XMP. In Roseobacter denitrificans (strain ATCC 33942 / OCh 114) (Erythrobacter sp. (strain OCh 114)), this protein is GMP synthase [glutamine-hydrolyzing].